Reading from the N-terminus, the 519-residue chain is MEELSSVGEQVFAAECILSKRLRKGKLEYLVKWRGWSSKHNSWEPEENILDPRLLLAFQKKEHEKEVQNRKRGKRPRGRPRKHTVTSSCSRRSKLKEPDAPSKSKSSSSSSSSTSSSSSSDEEEDDSDLDSKRGPRGRETHPVPQKKAQILVAKPELKDPIRKKRGRKPLPPEQKAARRPVSLAKVLKTTRKDLGTSAAKLPPPLSAPVAGLAALKAHTKEACGGPSTMATPENLASLMKGMAGSPSRGGIWQSSIVHYMNRMSQSQVQAASRLALKAQATNKCGLGLDLKVRTQKGGELGGSPAGGKVPKAPGGGAAEQQRGNHSGSPGAQLAPTQELSLQVLDLQSVKNGVPGVGLLARHAPAKAIPATNPATGKGPGSGPTGANMTNAPTDNNKGEKLTCKATALPAPSVKRDTVKSVAASGGQEGHTAPGEGRKPPALSELSTGEENSSSDSDPDSTSLPSAAQNLSVAIQTSQDWKPTRSLIEHVFVTDVTANLITVTVKESPTSVGFFNLRHY.

Residues 12–70 (FAAECILSKRLRKGKLEYLVKWRGWSSKHNSWEPEENILDPRLLLAFQKKEHEKEVQNR) form the Chromo domain. The segment covering 60–69 (KKEHEKEVQN) has biased composition (basic and acidic residues). Residues 60 to 180 (KKEHEKEVQN…PPEQKAARRP (121 aa)) are disordered. The span at 70–84 (RKRGKRPRGRPRKHT) shows a compositional bias: basic residues. The a.T hook DNA-binding region spans 75-87 (RPRGRPRKHTVTS). The span at 103-119 (KSKSSSSSSSSTSSSSS) shows a compositional bias: low complexity. Basic and acidic residues predominate over residues 129 to 141 (LDSKRGPRGRETH). Residues K147 and K154 each participate in a glycyl lysine isopeptide (Lys-Gly) (interchain with G-Cter in SUMO2) cross-link. The short motif at 164 to 169 (KRGRKP) is the Nuclear localization signal element. Asymmetric dimethylarginine; alternate is present on R248. An Omega-N-methylarginine; alternate modification is found at R248. 2 disordered regions span residues 295–336 (QKGG…LAPT) and 367–464 (AIPA…TSLP). S303 bears the Phosphoserine mark. Polar residues-rich tracts occupy residues 321 to 336 (QRGNHSGSPGAQLAPT) and 384 to 395 (TGANMTNAPTDN). The segment covering 453 to 464 (SSDSDPDSTSLP) has biased composition (low complexity).

As to quaternary structure, component of a PRC1-like complex. The composition of the PRC1 complex may differ between the PRC1 complex in pluripotent embryonic stem cells containing RNF2, CBX7 and PCGF2, and the PRC1 complex in differentiating cells containing RNF2, CBX2, CBX4 and BMI1. Interacts with RING1/RNF2. Interacts (via chromodomain) with histone H3K9Me3 and H3K27me3. May interact with H3C15 and H3C1. As to expression, expressed in embryoid bodies.

The protein localises to the nucleus speckle. It is found in the chromosome. Functionally, component of a Polycomb group (PcG) multiprotein PRC1-like complex, a complex class required to maintain the transcriptionally repressive state of many genes, including Hox genes, throughout development. PcG PRC1 complex acts via chromatin remodeling and modification of histones; it mediates monoubiquitination of histone H2A 'Lys-119', rendering chromatin heritably changed in its expressibility. Binds to histone H3 trimethylated at 'Lys-9' (H3K9me3) or at 'Lys-27' (H3K27me3). Plays a role in the lineage differentiation of the germ layers in embryonic development. Involved in sexual development, acting as activator of NR5A1 expression. In Mus musculus (Mouse), this protein is Chromobox protein homolog 2 (Cbx2).